The sequence spans 374 residues: tRNA-specific 2-thiouridylase MnmA (374 aa).

Residues 12-19 (GMSGGVDS) and M38 contribute to the ATP site. The segment at 98 to 100 (NPD) is interaction with target base in tRNA. The active-site Nucleophile is the C103. C103 and C202 are joined by a disulfide. G128 is an ATP binding site. An interaction with tRNA region spans residues 152–154 (KDQ). C202 (cysteine persulfide intermediate) is an active-site residue. Residues 316-317 (RY) are interaction with tRNA.

It belongs to the MnmA/TRMU family.

The protein localises to the cytoplasm. The catalysed reaction is S-sulfanyl-L-cysteinyl-[protein] + uridine(34) in tRNA + AH2 + ATP = 2-thiouridine(34) in tRNA + L-cysteinyl-[protein] + A + AMP + diphosphate + H(+). In terms of biological role, catalyzes the 2-thiolation of uridine at the wobble position (U34) of tRNA, leading to the formation of s(2)U34. This chain is tRNA-specific 2-thiouridylase MnmA, found in Vibrio vulnificus (strain CMCP6).